The following is a 141-amino-acid chain: Endoribonuclease YbeY (141 aa).

His105, His109, and Asp115 together coordinate Zn(2+).

The protein belongs to the endoribonuclease YbeY family. Zn(2+) serves as cofactor.

It localises to the cytoplasm. In terms of biological role, single strand-specific metallo-endoribonuclease involved in late-stage 70S ribosome quality control and in maturation of the 3' terminus of the 16S rRNA. The polypeptide is Endoribonuclease YbeY (Karelsulcia muelleri (strain GWSS) (Sulcia muelleri)).